A 268-amino-acid chain; its full sequence is Shikimate dehydrogenase (NADP(+)) (268 aa).

Shikimate-binding positions include 14–16 and Thr-61; that span reads SKS. Lys-65 functions as the Proton acceptor in the catalytic mechanism. Residues Asn-86 and Asp-102 each contribute to the shikimate site. Residues 126 to 130, 149 to 154, and Met-213 each bind NADP(+); these read GAGGA and NRTFSK. Residue Tyr-215 participates in shikimate binding. Residue Gly-238 coordinates NADP(+).

This sequence belongs to the shikimate dehydrogenase family. As to quaternary structure, homodimer.

The enzyme catalyses shikimate + NADP(+) = 3-dehydroshikimate + NADPH + H(+). Its pathway is metabolic intermediate biosynthesis; chorismate biosynthesis; chorismate from D-erythrose 4-phosphate and phosphoenolpyruvate: step 4/7. Involved in the biosynthesis of the chorismate, which leads to the biosynthesis of aromatic amino acids. Catalyzes the reversible NADPH linked reduction of 3-dehydroshikimate (DHSA) to yield shikimate (SA). The polypeptide is Shikimate dehydrogenase (NADP(+)) (Haemophilus influenzae (strain PittEE)).